The primary structure comprises 1553 residues: Pre-mRNA cleavage complex 2 protein Pcf11 (1553 aa).

Ser2 is subject to N-acetylserine. A CID domain is found at 14-142 (AREDACRDYQ…ALDVRVNSLD (129 aa)). Position 120 is a phosphoserine (Ser120). Thr121 bears the Phosphothreonine mark. Positions 167–186 (NKSPDEPSTPGTVVSSPSIS) are disordered. Phosphoserine is present on residues Ser169 and Ser182. The span at 174–186 (STPGTVVSSPSIS) shows a compositional bias: low complexity. Residues 208–235 (LLAKQKQLLELQQKKLELELEQAKAQLA) are a coiled coil. Positions 265–648 (AVKTPHQVPV…KQQHRLSVDA (384 aa)) are disordered. Lys291 is covalently cross-linked (Glycyl lysine isopeptide (Lys-Gly) (interchain with G-Cter in SUMO2)). Residues 308–318 (HGKEQSHRKEF) are compositionally biased toward basic and acidic residues. The segment covering 321–342 (NTINQSDIKTSKNVPSEKLNSS) has biased composition (polar residues). Lys329 participates in a covalent cross-link: Glycyl lysine isopeptide (Lys-Gly) (interchain with G-Cter in SUMO2). Basic and acidic residues-rich tracts occupy residues 343 to 365 (KQEK…DSKS), 381 to 422 (HTKD…DVKE), and 428 to 443 (EKKE…EHRV). Residue Lys457 forms a Glycyl lysine isopeptide (Lys-Gly) (interchain with G-Cter in SUMO2) linkage. Residues 476 to 487 (STRKRSRSRSPK) are compositionally biased toward basic residues. 4 positions are modified to phosphoserine: Ser490, Ser495, Ser510, and Ser512. A compositionally biased stretch (basic residues) spans 495 to 509 (SPKRRDRRSPKRRQR). Basic and acidic residues-rich tracts occupy residues 530 to 568 (SHME…DRPQ) and 600 to 616 (SGWE…EHSK). A Phosphoserine modification is found at Ser645. A Glycyl lysine isopeptide (Lys-Gly) (interchain with G-Cter in SUMO2) cross-link involves residue Lys654. Ser705 bears the Phosphoserine mark. The tract at residues 707-733 (FNDRFPLKRPRYEDSDKPFVDGPASRF) is disordered. Positions 716–725 (PRYEDSDKPF) are enriched in basic and acidic residues. Residue Lys723 forms a Glycyl lysine isopeptide (Lys-Gly) (interchain with G-Cter in SUMO2) linkage. Ser777 carries the post-translational modification Phosphoserine. Thr785 carries the phosphothreonine modification. Ser794 is subject to Phosphoserine. Arg805, Arg820, and Arg833 each carry asymmetric dimethylarginine. Position 851 is a phosphoserine (Ser851). The disordered stretch occupies residues 921-940 (HGPSGAAIRFDGPHGQPGGG). Arg929, Arg944, Arg957, Arg982, Arg995, Arg1008, Arg1092, and Arg1103 each carry asymmetric dimethylarginine. A Glycyl lysine isopeptide (Lys-Gly) (interchain with G-Cter in SUMO2) cross-link involves residue Lys1276. The interval 1286–1313 (DSATAQVTEAVAQPPPEEDEDQNEDQDV) is disordered. A compositionally biased stretch (acidic residues) spans 1301 to 1313 (PEEDEDQNEDQDV). Glycyl lysine isopeptide (Lys-Gly) (interchain with G-Cter in SUMO2) cross-links involve residues Lys1417, Lys1509, Lys1522, and Lys1544. The segment at 1516–1553 (CESPKVKEEQIDAPPACSEESVATPTEIKTESDTVESV) is disordered.

In terms of assembly, associates with the phosphorylated CTD domain of POLR2A /RNA polymerase II. Phosphorylation at Ser-120 and/or Thr-121 by WNK1 weakens its association with POLR2A/RNA polymerase II, promoting transcript release from the chromatin template and mRNA export to the cytoplasm.

It is found in the nucleus. Component of pre-mRNA cleavage complex II, which promotes transcription termination by RNA polymerase II. This is Pre-mRNA cleavage complex 2 protein Pcf11 from Mus musculus (Mouse).